A 268-amino-acid chain; its full sequence is uncharacterized protein (268 aa).

Residues 45–64 (SDTQGPAPGINGQGKPSPGA) are disordered.

This is an uncharacterized protein from Aquifex aeolicus (strain VF5).